Consider the following 371-residue polypeptide: Ferrochelatase (371 aa).

Residues histidine 218 and glutamate 299 each contribute to the Fe cation site.

Belongs to the ferrochelatase family.

It localises to the cytoplasm. It carries out the reaction heme b + 2 H(+) = protoporphyrin IX + Fe(2+). The protein operates within porphyrin-containing compound metabolism; protoheme biosynthesis; protoheme from protoporphyrin-IX: step 1/1. In terms of biological role, catalyzes the ferrous insertion into protoporphyrin IX. The sequence is that of Ferrochelatase from Cupriavidus taiwanensis (strain DSM 17343 / BCRC 17206 / CCUG 44338 / CIP 107171 / LMG 19424 / R1) (Ralstonia taiwanensis (strain LMG 19424)).